A 123-amino-acid chain; its full sequence is UPF0102 protein PputGB1_4524 (123 aa).

This sequence belongs to the UPF0102 family.

The sequence is that of UPF0102 protein PputGB1_4524 from Pseudomonas putida (strain GB-1).